Here is a 388-residue protein sequence, read N- to C-terminus: Nesprin-4 (388 aa).

The Cytoplasmic segment spans residues Met1–Pro339. The interval Glu60–Asp92 is disordered. The span at Ser78–Asp92 shows a compositional bias: basic and acidic residues. Residues Val331 to Ile388 form the KASH domain. A helical; Anchor for type IV membrane protein membrane pass occupies residues Leu340–Leu360. Residues Ser361–Ile388 are Perinuclear space-facing.

Belongs to the nesprin family. As to quaternary structure, core component of LINC complexes which are composed of inner nuclear membrane SUN domain-containing proteins coupled to outer nuclear membrane KASH domain-containing nesprins. SUN and KASH domain-containing proteins seem to bind each other promiscuously; however, differentially expression of LINC complex constituents can give rise to specific assemblies. Probably part of a SUN1-containing LINC complex. Interacts with kinesins KIF5B and KLC1. The disulfid bond with SUN1 or SUN2 is required for stability of the respective LINC complex under tensile forces. As to expression, expressed in secretory epithelial cells, such as those found in exocrine pancreas, bulbourethral gland, mammary gland and salivary gland (at protein level). Also expressed in the cochlea, where it is restricted primarily to the 3 rows of outer hair cells and 1 row of inner hair cells (at protein level). Not detected in other cells of the cochlea, including Deiter's cells and pillar cells, nor in liver and kidney (at protein level).

Its subcellular location is the nucleus outer membrane. Functionally, as a component of the LINC (LInker of Nucleoskeleton and Cytoskeleton) complex, involved in the connection between the nuclear lamina and the cytoskeleton. The nucleocytoplasmic interactions established by the LINC complex play an important role in the transmission of mechanical forces across the nuclear envelope and in nuclear movement and positioning. Behaves as a kinesin cargo, providing a functional binding site for kinesin-1 at the nuclear envelope. Hence may contribute to the establishment of secretory epithelial morphology, by promoting kinesin-dependent apical migration of the centrosome and Golgi apparatus and basal localization of the nucleus. The protein is Nesprin-4 (Syne4) of Mus musculus (Mouse).